The chain runs to 272 residues: 2-succinyl-6-hydroxy-2,4-cyclohexadiene-1-carboxylate synthase (272 aa).

This sequence belongs to the AB hydrolase superfamily. MenH family. In terms of assembly, monomer.

It catalyses the reaction 5-enolpyruvoyl-6-hydroxy-2-succinyl-cyclohex-3-ene-1-carboxylate = (1R,6R)-6-hydroxy-2-succinyl-cyclohexa-2,4-diene-1-carboxylate + pyruvate. Its pathway is quinol/quinone metabolism; 1,4-dihydroxy-2-naphthoate biosynthesis; 1,4-dihydroxy-2-naphthoate from chorismate: step 3/7. It functions in the pathway quinol/quinone metabolism; menaquinone biosynthesis. Catalyzes a proton abstraction reaction that results in 2,5-elimination of pyruvate from 2-succinyl-5-enolpyruvyl-6-hydroxy-3-cyclohexene-1-carboxylate (SEPHCHC) and the formation of 2-succinyl-6-hydroxy-2,4-cyclohexadiene-1-carboxylate (SHCHC). The sequence is that of 2-succinyl-6-hydroxy-2,4-cyclohexadiene-1-carboxylate synthase from Yersinia pestis bv. Antiqua (strain Nepal516).